We begin with the raw amino-acid sequence, 256 residues long: Hemin import ATP-binding protein HmuV (256 aa).

One can recognise an ABC transporter domain in the interval 2 to 238 (ISAQNLVYSL…QELTMLYGAD (237 aa)). 34–41 (GPNGAGKS) contributes to the ATP binding site.

This sequence belongs to the ABC transporter superfamily. Heme (hemin) importer (TC 3.A.1.14.5) family. In terms of assembly, the complex is composed of two ATP-binding proteins (HmuV), two transmembrane proteins (HmuU) and a solute-binding protein (HmuT).

Its subcellular location is the cell inner membrane. Part of the ABC transporter complex HmuTUV involved in hemin import. Responsible for energy coupling to the transport system. The sequence is that of Hemin import ATP-binding protein HmuV from Shigella dysenteriae.